The chain runs to 555 residues: CTP synthase (555 aa).

Residues 1-265 (MTRYIFITGG…GNRVCEKLNI (265 aa)) are amidoligase domain. Serine 13 serves as a coordination point for CTP. Serine 13 is a UTP binding site. ATP-binding positions include 14–19 (SLGKGI) and aspartate 71. Aspartate 71 and glutamate 139 together coordinate Mg(2+). CTP contacts are provided by residues 146–148 (DIE), 186–191 (KTKPTQ), and lysine 222. UTP-binding positions include 186–191 (KTKPTQ) and lysine 222. Positions 290 to 541 (TVAVVGKYVD…IKAGLAAKEA (252 aa)) constitute a Glutamine amidotransferase type-1 domain. Residue glycine 351 participates in L-glutamine binding. Residue cysteine 378 is the Nucleophile; for glutamine hydrolysis of the active site. L-glutamine contacts are provided by residues 379–382 (LGMQ), glutamate 402, and arginine 469. Catalysis depends on residues histidine 514 and glutamate 516.

Belongs to the CTP synthase family. As to quaternary structure, homotetramer.

The catalysed reaction is UTP + L-glutamine + ATP + H2O = CTP + L-glutamate + ADP + phosphate + 2 H(+). It catalyses the reaction L-glutamine + H2O = L-glutamate + NH4(+). It carries out the reaction UTP + NH4(+) + ATP = CTP + ADP + phosphate + 2 H(+). Its pathway is pyrimidine metabolism; CTP biosynthesis via de novo pathway; CTP from UDP: step 2/2. Its activity is regulated as follows. Allosterically activated by GTP, when glutamine is the substrate; GTP has no effect on the reaction when ammonia is the substrate. The allosteric effector GTP functions by stabilizing the protein conformation that binds the tetrahedral intermediate(s) formed during glutamine hydrolysis. Inhibited by the product CTP, via allosteric rather than competitive inhibition. Functionally, catalyzes the ATP-dependent amination of UTP to CTP with either L-glutamine or ammonia as the source of nitrogen. Regulates intracellular CTP levels through interactions with the four ribonucleotide triphosphates. The protein is CTP synthase of Coxiella burnetii (strain CbuK_Q154) (Coxiella burnetii (strain Q154)).